We begin with the raw amino-acid sequence, 377 residues long: Probable sensor histidine kinase HK (377 aa).

Disordered regions lie at residues 1–169 (MAHP…RPAD) and 346–377 (LPTPRPPFHEELPRITSSDTKDPNREHDTSDQ). Positions 10–54 (RLQRRHGARSGSSRCRHRRPVPRRRSRSRPRWRAARAHRRHHRRS) are enriched in basic residues. Residues 84 to 98 (RRPDPRGGANTDHHA) are compositionally biased toward basic and acidic residues. 2 stretches are compositionally biased toward basic residues: residues 99-115 (APRHRRAAAGTSHRRRD) and 137-146 (TTVRRRRQPR). The 205-residue stretch at 146 to 350 (RITHPVGTAD…ELRITLPTPR (205 aa)) folds into the Histidine kinase domain. The residue at position 149 (H149) is a Phosphohistidine; by autocatalysis. Residues 352–377 (PFHEELPRITSSDTKDPNREHDTSDQ) show a composition bias toward basic and acidic residues.

Post-translationally, autophosphorylated.

The catalysed reaction is ATP + protein L-histidine = ADP + protein N-phospho-L-histidine.. Functionally, member of the two-component system HK/TcrA. Phosphorylates TcrA. The protein is Probable sensor histidine kinase HK of Mycobacterium tuberculosis (strain CDC 1551 / Oshkosh).